A 1097-amino-acid polypeptide reads, in one-letter code: DNA-directed RNA polymerase subunit beta (1097 aa).

Positions 1070–1097 are disordered; the sequence is LMQDVNPRRNTPSRPTYESLGTSEYEED. Polar residues predominate over residues 1077–1091; that stretch reads RRNTPSRPTYESLGT.

It belongs to the RNA polymerase beta chain family. In cyanobacteria the RNAP catalytic core is composed of 2 alpha, 1 beta, 1 beta', 1 gamma and 1 omega subunit. When a sigma factor is associated with the core the holoenzyme is formed, which can initiate transcription.

It carries out the reaction RNA(n) + a ribonucleoside 5'-triphosphate = RNA(n+1) + diphosphate. In terms of biological role, DNA-dependent RNA polymerase catalyzes the transcription of DNA into RNA using the four ribonucleoside triphosphates as substrates. This chain is DNA-directed RNA polymerase subunit beta, found in Prochlorococcus marinus (strain MIT 9515).